The following is a 375-amino-acid chain: 23S rRNA (uracil(747)-C(5))-methyltransferase RlmC (375 aa).

4 residues coordinate [4Fe-4S] cluster: C3, C11, C14, and C87. S-adenosyl-L-methionine contacts are provided by Q212, F241, E262, and N307. The active-site Nucleophile is the C334.

It belongs to the class I-like SAM-binding methyltransferase superfamily. RNA M5U methyltransferase family. RlmC subfamily.

It catalyses the reaction uridine(747) in 23S rRNA + S-adenosyl-L-methionine = 5-methyluridine(747) in 23S rRNA + S-adenosyl-L-homocysteine + H(+). In terms of biological role, catalyzes the formation of 5-methyl-uridine at position 747 (m5U747) in 23S rRNA. This Shigella flexneri serotype 5b (strain 8401) protein is 23S rRNA (uracil(747)-C(5))-methyltransferase RlmC.